Reading from the N-terminus, the 282-residue chain is Homeobox protein Hox-C12 (282 aa).

Disordered stretches follow at residues 94–129 and 147–214; these read YYRE…PLEP and GGDG…NSRS. The segment covering 162 to 175 has biased composition (low complexity); that stretch reads SCQSLESDSSSSLL. The homeobox DNA-binding region spans 214–273; the sequence is SRKKRKPYSKLQLAELEGEFLVNEFITRQRRRELSDRLNLSDQQVKIWFQNRRMKKKRLL.

Belongs to the Abd-B homeobox family.

The protein localises to the nucleus. Its function is as follows. Sequence-specific transcription factor which is part of a developmental regulatory system that provides cells with specific positional identities on the anterior-posterior axis. The polypeptide is Homeobox protein Hox-C12 (HOXC12) (Homo sapiens (Human)).